The chain runs to 247 residues: UPF0259 membrane protein BUAP5A_271 (247 aa).

A run of 6 helical transmembrane segments spans residues 20-40, 85-105, 114-134, 137-157, 188-208, and 218-238; these read IGAI…IDMF, IMES…LISV, IVSS…LNFL, FIIQ…SIIL, IIGP…MLLA, and LFLI…IYLF.

The protein belongs to the UPF0259 family.

The protein resides in the cell membrane. The chain is UPF0259 membrane protein BUAP5A_271 from Buchnera aphidicola subsp. Acyrthosiphon pisum (strain 5A).